The chain runs to 512 residues: Ferrochelatase-2, chloroplastic (512 aa).

Positions 1–32 are disordered; that stretch reads MNCPAMTASPSSSSSSSYSTFRPPPPLLPQLS. The N-terminal 83 residues, 1–83, are a transit peptide targeting the chloroplast; the sequence is MNCPAMTASP…SNPLNISSSS (83 aa). Low complexity predominate over residues 9 to 21; it reads SPSSSSSSSYSTF. N-acetylvaline is present on Val-84.

Belongs to the ferrochelatase family. Expressed in leaves and flowers.

The protein resides in the plastid. It localises to the chloroplast membrane. The protein localises to the chloroplast thylakoid membrane. The enzyme catalyses heme b + 2 H(+) = protoporphyrin IX + Fe(2+). It participates in porphyrin-containing compound metabolism; protoheme biosynthesis; protoheme from protoporphyrin-IX: step 1/1. Its function is as follows. Catalyzes the last step of heme biosynthesis by inserting ferrous iron into protoporphyrin IX to produce protoheme. Produces heme for photosynthetic cytochromes, and for proteins involved in abiotic and biotic stress responses. May play a role in the quality control of individual chloroplasts during photo-oxidative stress through regulation of heme biosynthesis. In Arabidopsis thaliana (Mouse-ear cress), this protein is Ferrochelatase-2, chloroplastic.